Reading from the N-terminus, the 600-residue chain is MVLILGRRLNREDLGVRDSPATKRKVFEMDPKSLTGHEFFDFSSGSSHAENILQIFNEFRDSRLFTDVIICVEGKEFPCHRAVLSACSSYFRAMFCNDHRESREMLVEINGILAEAMECFLQYVYTGKVKITTENVQYLFETSSLFQISVLRDACAKFLEEQLDPCNCLGIQRFADTHSLKTLFTKCKNFALQTFEDVSQHEEFLELDKDELIDYICSDELVIGKEEMVFEAVMRWVYRAVDLRRPLLHELLTHVRLPLLHPNYFVQTVEVDQLIQNSPECYQLLHEARRYHILGNEMMSPRTRPRRSTGYSEVIVVVGGCERVGGFNLPYTECYDPVTGEWKSLAKLPEFTKSEYAVCALRNDILVSGGRINSRDVWIYNSQLNIWIRVASLNKGRWRHKMAVLLGKVYVVGGYDGQNRLSSVECYDSFSNRWTEVAPLKEAVSSPAVTSCVGKLFVIGGGPDDNTCSDKVQSYDPETNSWLLRAAIPIAKRCITAVSLNNLIYVAGGLTKAIYCYDPVEDYWMHVQNTFSRQENCGMSVCNGKIYILGGRRENGEATDTILCYDPATSIITGVAAMPRPVSYHGCVTIHRYNEKCFKL.

Residues 66 to 133 (TDVIICVEGK…VYTGKVKITT (68 aa)) form the BTB domain. The BACK domain maps to 168 to 270 (CLGIQRFADT…HPNYFVQTVE (103 aa)). Kelch repeat units lie at residues 314–363 (VIVV…ALRN), 365–407 (ILVS…VLLG), 408–454 (KVYV…SCVG), 456–502 (LFVI…SLNN), 504–544 (IYVA…VCNG), and 546–592 (IYIL…TIHR).

As to quaternary structure, forms homodimers. Interacts with GRIK2. Component of the BCR(KLHL24) E3 ubiquitin ligase complex, composed of CUL3, RBX1 and KLHL24. Interacts with CUL3. Interacts with KRT14. In terms of processing, autoubiquitinated. Autoubiquitination leads to proteasomal degradation and is necessary to control KLHL24 levels. Expressed in the skin. Found in keratinocytes, dermal fibroblasts, and melanocytes. Basal-layer keratinocytes have lower KLHL24 expression than suprabasal keratinocytes. Expressed in the brain, spinal cord, liver, testis, heart and at higher levels in the skeletal muscle.

The protein localises to the perikaryon. Its subcellular location is the cell projection. It is found in the axon. The protein resides in the cytoplasm. It localises to the cell junction. The protein localises to the desmosome. Its subcellular location is the adherens junction. Its function is as follows. Necessary to maintain the balance between intermediate filament stability and degradation, a process that is essential for skin integrity. As part of the BCR(KLHL24) E3 ubiquitin ligase complex, mediates ubiquitination of KRT14 and controls its levels during keratinocytes differentiation. Specifically reduces kainate receptor-mediated currents in hippocampal neurons, most probably by modulating channel properties. Has a crucial role in cardiac development and function. The sequence is that of Kelch-like protein 24 (KLHL24) from Homo sapiens (Human).